Here is a 372-residue protein sequence, read N- to C-terminus: High-affinity lysophosphatidic acid receptor (372 aa).

The Extracellular segment spans residues 1–38 (MGCNNTALDNCMLPNLSIATAPLDLRFAFSTPLRMLLA). Asn4 and Asn15 each carry an N-linked (GlcNAc...) asparagine glycan. A helical membrane pass occupies residues 39-59 (IIMILMIAIAFLGNAIVCLIV). Residues 60–80 (YQKPAMRSAINLLLATLAFSD) lie on the Cytoplasmic side of the membrane. The chain crosses the membrane as a helical span at residues 81–101 (IMLSLFCMPFTAVTIITGSWL). Residues 102–108 (FGTQFCQ) lie on the Extracellular side of the membrane. The chain crosses the membrane as a helical span at residues 109 to 129 (ISAMLYWFFVLEGVAILLIIS). Residues 130–149 (VDRFLIIVQRQDKLNPHRAK) lie on the Cytoplasmic side of the membrane. Residues 150-170 (IMIAASWVLSFCISLPSVVGW) form a helical membrane-spanning segment. Topologically, residues 171–198 (TLVEVPTRAPQCVLGYTEFSADRVYAVM) are extracellular. A helical membrane pass occupies residues 199-219 (LIVAVFFIPFSVMLYSYLCIL). Topologically, residues 220–268 (NTVRRNAVRIHTHADSLCLSQVSKLGLMGLQRPHQMNVDMSFKTRAFTT) are cytoplasmic. Residues 269-289 (ILILFIGFSLCWLPHSVFSLL) traverse the membrane as a helical segment. The Extracellular portion of the chain corresponds to 290–301 (SVFSRTFYYSSS). A helical membrane pass occupies residues 302-324 (FYSISTCTLWLTYLKSVFNPVIY). Over 325–372 (CWRIKKFREACLEFMPKTFKILPNVRGRTRRRIRPSTIYVCGEHQSAV) the chain is Cytoplasmic.

It belongs to the G-protein coupled receptor 1 family. As to expression, ubiquitously expressed.

Its subcellular location is the cell membrane. Functionally, highly selective receptor for lysophosphatidic acid (LPA), a mediator of diverse cellular activities. The polypeptide is High-affinity lysophosphatidic acid receptor (Xenopus laevis (African clawed frog)).